A 1068-amino-acid chain; its full sequence is Retinoblastoma-like protein 1 (1068 aa).

Position 332 is a phosphothreonine; by CDK2 (Thr332). Thr369 is subject to Phosphothreonine; by CDK4. The residue at position 385 (Thr385) is a Phosphothreonine; by CDK2. Residues 385-584 are domain A; that stretch reads TPVASATQSV…WEALQVSANK (200 aa). Residues 385–949 are pocket; binds T and E1A; it reads TPVASATQSV…GRVKSFALKY (565 aa). The tract at residues 585 to 780 is spacer; the sequence is VPTCEEVIFP…AQEVHSTGIN (196 aa). Ser640 bears the Phosphoserine; by CDK2 and CDK4 mark. Residues Ser650 and Ser749 each carry the phosphoserine modification. Phosphoserine; by CDK2 is present on Ser762. The interval 781–949 is domain B; the sequence is RPKRTGSLAL…GRVKSFALKY (169 aa). A phosphoserine; by CDK2 and CDK4 mark is found at Ser964 and Ser975. Ser988 is subject to Phosphoserine; by CDK2. Residue Thr997 is modified to Phosphothreonine; by CDK2. Ser1009 bears the Phosphoserine; by CDK2 mark. Ser1041 bears the Phosphoserine mark.

The protein belongs to the retinoblastoma protein (RB) family. As to quaternary structure, component of the DREAM complex (also named LINC complex) at least composed of E2F4, E2F5, LIN9, LIN37, LIN52, LIN54, MYBL1, MYBL2, RBL1, RBL2, RBBP4, TFDP1 and TFDP2. The complex exists in quiescent cells where it represses cell cycle-dependent genes. It dissociates in S phase when LIN9, LIN37, LIN52 and LIN54 form a subcomplex that binds to MYBL2. Interacts with AATF. Interacts with KDM5A. Interacts with KMT5B and KMT5C. Interacts with USP4. Interacts with RBBP9. (Microbial infection) Interacts with SV40 and JC virus large T antigens. Large T antigen, but not E1A, binds only to the unphosphorylated form. In terms of assembly, (Microbial infection) Interacts with JC virus small t antigen. Post-translationally, cell-cycle arrest properties are inactivated by phosphorylation on Thr-332, Ser-640, Ser-964 and Ser-975 by CDK4.

The protein resides in the nucleus. Key regulator of entry into cell division. Directly involved in heterochromatin formation by maintaining overall chromatin structure and, in particular, that of constitutive heterochromatin by stabilizing histone methylation. Recruits and targets histone methyltransferases KMT5B and KMT5C, leading to epigenetic transcriptional repression. Controls histone H4 'Lys-20' trimethylation. Probably acts as a transcription repressor by recruiting chromatin-modifying enzymes to promoters. Potent inhibitor of E2F-mediated trans-activation. May act as a tumor suppressor. The sequence is that of Retinoblastoma-like protein 1 (RBL1) from Homo sapiens (Human).